We begin with the raw amino-acid sequence, 807 residues long: Glycerol-3-phosphate acyltransferase (807 aa).

Residues 306–311 (HRSHMD) carry the HXXXXD motif motif.

It belongs to the GPAT/DAPAT family.

The protein localises to the cell inner membrane. It catalyses the reaction sn-glycerol 3-phosphate + an acyl-CoA = a 1-acyl-sn-glycero-3-phosphate + CoA. The protein operates within phospholipid metabolism; CDP-diacylglycerol biosynthesis; CDP-diacylglycerol from sn-glycerol 3-phosphate: step 1/3. The chain is Glycerol-3-phosphate acyltransferase (plsB) from Escherichia coli O157:H7.